A 69-amino-acid polypeptide reads, in one-letter code: Cytochrome b-c1 complex subunit 6 (69 aa).

Cystine bridges form between Cys17–Cys59 and Cys31–Cys45.

It belongs to the UQCRH/QCR6 family. As to quaternary structure, component of the ubiquinol-cytochrome c oxidoreductase (cytochrome b-c1 complex, complex III, CIII), a multisubunit enzyme composed of 3 respiratory subunits cytochrome b, cytochrome c1 and Rieske protein, 2 core protein subunits, and additional low-molecular weight protein subunits. The complex exists as an obligatory dimer and forms supercomplexes (SCs) in the inner mitochondrial membrane with cytochrome c oxidase (complex IV, CIV).

The protein localises to the mitochondrion inner membrane. Functionally, component of the ubiquinol-cytochrome c oxidoreductase, a multisubunit transmembrane complex that is part of the mitochondrial electron transport chain which drives oxidative phosphorylation. The respiratory chain contains 3 multisubunit complexes succinate dehydrogenase (complex II, CII), ubiquinol-cytochrome c oxidoreductase (cytochrome b-c1 complex, complex III, CIII) and cytochrome c oxidase (complex IV, CIV), that cooperate to transfer electrons derived from NADH and succinate to molecular oxygen, creating an electrochemical gradient over the inner membrane that drives transmembrane transport and the ATP synthase. The cytochrome b-c1 complex catalyzes electron transfer from ubiquinol to cytochrome c, linking this redox reaction to translocation of protons across the mitochondrial inner membrane, with protons being carried across the membrane as hydrogens on the quinol. In the process called Q cycle, 2 protons are consumed from the matrix, 4 protons are released into the intermembrane space and 2 electrons are passed to cytochrome c. The chain is Cytochrome b-c1 complex subunit 6 from Solanum tuberosum (Potato).